The following is a 430-amino-acid chain: Pre-B-cell leukemia transcription factor 2 (430 aa).

A disordered region spans residues 1–52 (MDERLLGPPPPGGGRGGLGLVGAEPGGPGEPPGGGDPGGGSGGVPGGRGKQD). Residues 13–48 (GGRGGLGLVGAEPGGPGEPPGGGDPGGGSGGVPGGR) show a composition bias toward gly residues. Residues 48–243 (RGKQDIGDIL…VMILRSRFLD (196 aa)) form the PBC domain. A PBC-A region spans residues 55–134 (DILQQIMTIT…EGVAGPEKGG (80 aa)). A phosphoserine mark is found at Ser136, Ser151, and Ser159. A PBC-B region spans residues 137–243 (AAAAAAAAAS…VMILRSRFLD (107 aa)). Positions 244 to 306 (ARRKRRNFSK…NKRIRYKKNI (63 aa)) form a DNA-binding region, homeobox; TALE-type. 2 disordered regions span residues 327-347 (GGHS…GGSF) and 375-430 (LRHS…DTSN). A phosphoserine mark is found at Ser330 and Ser395. Residues 409-418 (VTPSSVTSPT) are compositionally biased toward polar residues.

The protein belongs to the TALE/PBX homeobox family. Forms heterodimers with MEIS1 and heterotrimers with MEIS1 and HOXA9. Interacts with PBXIP1.

It localises to the nucleus. Its function is as follows. Transcriptional activator that binds the sequence 5'-ATCAATCAA-3'. Activates transcription of PF4 in complex with MEIS1. The chain is Pre-B-cell leukemia transcription factor 2 (Pbx2) from Mus musculus (Mouse).